A 214-amino-acid chain; its full sequence is Orotate phosphoribosyltransferase (214 aa).

Residue Lys-26 participates in 5-phospho-alpha-D-ribose 1-diphosphate binding. 34 to 35 (FF) lines the orotate pocket. 5-phospho-alpha-D-ribose 1-diphosphate is bound by residues 72–73 (YK), Arg-99, Lys-100, Lys-103, His-105, and 124–132 (DDVITAGTA). Positions 128 and 157 each coordinate orotate.

Belongs to the purine/pyrimidine phosphoribosyltransferase family. PyrE subfamily. As to quaternary structure, homodimer. The cofactor is Mg(2+).

The enzyme catalyses orotidine 5'-phosphate + diphosphate = orotate + 5-phospho-alpha-D-ribose 1-diphosphate. It participates in pyrimidine metabolism; UMP biosynthesis via de novo pathway; UMP from orotate: step 1/2. In terms of biological role, catalyzes the transfer of a ribosyl phosphate group from 5-phosphoribose 1-diphosphate to orotate, leading to the formation of orotidine monophosphate (OMP). This Pseudomonas fluorescens (strain SBW25) protein is Orotate phosphoribosyltransferase.